We begin with the raw amino-acid sequence, 58 residues long: Small ribosomal subunit protein bS21 (58 aa).

Residues 32-42 (VRKREHYEKPS) show a composition bias toward basic and acidic residues. Residues 32-58 (VRKREHYEKPSVKKKKKSEAARKRKFK) are disordered. Basic residues predominate over residues 43-58 (VKKKKKSEAARKRKFK).

The protein belongs to the bacterial ribosomal protein bS21 family.

The polypeptide is Small ribosomal subunit protein bS21 (Clostridium botulinum (strain Okra / Type B1)).